Consider the following 248-residue polypeptide: Small ribosomal subunit protein uS2 (248 aa).

The protein belongs to the universal ribosomal protein uS2 family.

In Janthinobacterium sp. (strain Marseille) (Minibacterium massiliensis), this protein is Small ribosomal subunit protein uS2.